The chain runs to 141 residues: uncharacterized protein (141 aa).

Its subcellular location is the mitochondrion. This is an uncharacterized protein from Arabidopsis thaliana (Mouse-ear cress).